The sequence spans 534 residues: MAGGGVVVVSGRGLSTGDYRGGLTVYVVMVAFMAACGGLLLGYDNGVTGGVVSLEAFEKKFFPDVWAKKQEVHEDSPYCTYDNAKLQLFVSSLFLAGLVSCLFASWITRNWGRKVTMGIGGAFFVAGGLVNAFAQDMAMLIVGRVLLGFGVGLGSQVVPQYLSEVAPFSHRGMLNIGYQLFVTIGILIAGLVNYAVRDWENGWRLSLGPAAAPGAILFLGSLVLPESPNFLVEKGKTEKGREVLQKLCGTSEVDAEFADIVAAVEIARPITMRQSWASLFTRRYMPQLLTSFVIQFFQQFTGINAIIFYVPVLFSSLGSANSAALLNTVVVGAVNVGSTLIAVMFSDKFGRRFLLIEGGIQCCLAMLTTGVVLAIEFAKYGTDPLPKAVASGILAVICIFISGFAWSWGPMGWLIPSEIFTLETRPAGTAVAVVGNFLFSFVIGQAFVSMLCAMEYGVFLFFAGWLVIMVLCAIFLLPETKGVPIERVQALYARHWFWNRVMGPAAAEVIAEDEKRVAAASAIIKEEELSKAMK.

At 1–21 (MAGGGVVVVSGRGLSTGDYRG) the chain is on the cytoplasmic side. Residues 22–42 (GLTVYVVMVAFMAACGGLLLG) traverse the membrane as a helical segment. At 43–87 (YDNGVTGGVVSLEAFEKKFFPDVWAKKQEVHEDSPYCTYDNAKLQ) the chain is on the extracellular side. A helical transmembrane segment spans residues 88–108 (LFVSSLFLAGLVSCLFASWIT). Topologically, residues 109–114 (RNWGRK) are cytoplasmic. Residues 115–135 (VTMGIGGAFFVAGGLVNAFAQ) form a helical membrane-spanning segment. Over 136 to 144 (DMAMLIVGR) the chain is Extracellular. A helical membrane pass occupies residues 145-165 (VLLGFGVGLGSQVVPQYLSEV). At 166–173 (APFSHRGM) the chain is on the cytoplasmic side. The chain crosses the membrane as a helical span at residues 174-194 (LNIGYQLFVTIGILIAGLVNY). The Extracellular segment spans residues 195–204 (AVRDWENGWR). A helical membrane pass occupies residues 205–225 (LSLGPAAAPGAILFLGSLVLP). Residues 226–299 (ESPNFLVEKG…TSFVIQFFQQ (74 aa)) lie on the Cytoplasmic side of the membrane. A helical transmembrane segment spans residues 300–322 (FTGINAIIFYVPVLFSSLGSANS). Residues 323–328 (AALLNT) are Extracellular-facing. A helical transmembrane segment spans residues 329–349 (VVVGAVNVGSTLIAVMFSDKF). Topologically, residues 350 to 352 (GRR) are cytoplasmic. A helical transmembrane segment spans residues 353 to 373 (FLLIEGGIQCCLAMLTTGVVL). Residues 374–387 (AIEFAKYGTDPLPK) lie on the Extracellular side of the membrane. The chain crosses the membrane as a helical span at residues 388 to 408 (AVASGILAVICIFISGFAWSW). At 409 to 433 (GPMGWLIPSEIFTLETRPAGTAVAV) the chain is on the cytoplasmic side. Residues 434-454 (VGNFLFSFVIGQAFVSMLCAM) form a helical membrane-spanning segment. The Extracellular portion of the chain corresponds to 455-456 (EY). The helical transmembrane segment at 457-477 (GVFLFFAGWLVIMVLCAIFLL) threads the bilayer. The Cytoplasmic portion of the chain corresponds to 478 to 534 (PETKGVPIERVQALYARHWFWNRVMGPAAAEVIAEDEKRVAAASAIIKEEELSKAMK).

Belongs to the major facilitator superfamily. Sugar transporter (TC 2.A.1.1) family.

The protein localises to the membrane. In terms of biological role, active uptake of hexoses. The protein is H(+)/hexose cotransporter 1 (HUP1) of Parachlorella kessleri (Green alga).